A 539-amino-acid polypeptide reads, in one-letter code: Protein mushroom body miniature (539 aa).

Polar residues predominate over residues 1 to 11 (MHNSGGQSGWN). The interval 1–345 (MHNSGGQSGW…EDDKKARKQK (345 aa)) is disordered. Over residues 67–79 (KFRDPQQELDNHQ) the composition is skewed to basic and acidic residues. Basic residues predominate over residues 80–89 (PNKRGGRRNR). A compositionally biased stretch (gly residues) spans 90–101 (GGGGGGGGWGGR). Over residues 199–208 (IKKEKEMEHK) the composition is skewed to basic and acidic residues. Over residues 268–289 (VASTPKPKAVKPVSSSDSSTSD) the composition is skewed to low complexity. Phosphoserine is present on residues serine 288 and serine 290. Threonine 292 and threonine 327 each carry phosphothreonine. The segment covering 327–336 (TDEEESTEPE) has biased composition (acidic residues). A Phosphoserine modification is found at serine 332. At threonine 333 the chain carries Phosphothreonine. 2 consecutive CCHC-type zinc fingers follow at residues 354-367 (CGIC…SFQC) and 371-386 (CRNC…NCPN). The tract at residues 421–513 (VTAPVSAKPK…AASLPPQVFP (93 aa)) is disordered. Basic residues predominate over residues 428–447 (KPKKDKKASIKKIKKSSQKR). Acidic residues predominate over residues 456–480 (DEEDDEEDDDEDEDDSSESDDSESS).

May be phosphorylated in vivo by CkIIalpha. mbm and CkIIalpha colocalize to the nucleolus and mbm is phosphorylated in vitro by CkIIalpha. As to expression, shows widespread expression in third instar larval brain with no apparent difference between males and females (at protein level). Detected at low levels in the mushroom body neuropil and is also expressed in many cells of the brain outside the mushroom body (at protein level). Not detected in third instar larval brain cells in anaphase (at protein level).

The protein resides in the nucleus. Its subcellular location is the nucleolus. The protein localises to the cytoplasm. Required for small ribosomal subunit biogenesis in neuroblasts. Plays a role in mushroom body development. This Drosophila melanogaster (Fruit fly) protein is Protein mushroom body miniature.